A 321-amino-acid chain; its full sequence is Sideroflexin-3 (321 aa).

The residue at position 1 (M1) is an N-acetylmethionine. The next 4 membrane-spanning stretches (helical) occupy residues 146–164 (LGTAYVSATTGAVATALGL), 174–194 (LVGRFVPFAAVAAANCINIPL), 226–246 (FQVVISRICMAIPAMAIPPLI), and 266–286 (LQVGLVGFCLVFATPLCCALF).

This sequence belongs to the sideroflexin family.

It localises to the mitochondrion membrane. The enzyme catalyses L-serine(in) = L-serine(out). Functionally, mitochondrial serine transporter that mediates transport of serine into mitochondria, an important step of the one-carbon metabolism pathway. Mitochondrial serine is converted to glycine and formate, which then exits to the cytosol where it is used to generate the charged folates that serve as one-carbon donors. In Homo sapiens (Human), this protein is Sideroflexin-3.